A 143-amino-acid chain; its full sequence is Nucleoside diphosphate kinase (143 aa).

ATP-binding residues include K11, F59, R87, T93, R104, and N114. H117 acts as the Pros-phosphohistidine intermediate in catalysis.

The protein belongs to the NDK family. As to quaternary structure, homotetramer. It depends on Mg(2+) as a cofactor.

The protein resides in the cytoplasm. The enzyme catalyses a 2'-deoxyribonucleoside 5'-diphosphate + ATP = a 2'-deoxyribonucleoside 5'-triphosphate + ADP. It carries out the reaction a ribonucleoside 5'-diphosphate + ATP = a ribonucleoside 5'-triphosphate + ADP. Its function is as follows. Major role in the synthesis of nucleoside triphosphates other than ATP. The ATP gamma phosphate is transferred to the NDP beta phosphate via a ping-pong mechanism, using a phosphorylated active-site intermediate. The protein is Nucleoside diphosphate kinase of Shewanella halifaxensis (strain HAW-EB4).